A 264-amino-acid polypeptide reads, in one-letter code: Small ribosomal subunit protein eS1 (264 aa).

Lys-34 is subject to N6-acetyllysine; alternate. Residue Lys-34 forms a Glycyl lysine isopeptide (Lys-Gly) (interchain with G-Cter in SUMO2); alternate linkage. Lys-56 carries the post-translational modification N6-acetyllysine. ADP-ribosyltyrosine is present on Tyr-155. Residues 233-264 (GEGGSSGKAAGDETGAKVERADGYEPPVQESV) are disordered. Ser-237 is subject to Phosphoserine. Basic and acidic residues predominate over residues 242–255 (AGDETGAKVERADG). The residue at position 249 (Lys-249) is an N6-acetyllysine; alternate. Residue Lys-249 forms a Glycyl lysine isopeptide (Lys-Gly) (interchain with G-Cter in SUMO2); alternate linkage. The residue at position 256 (Tyr-256) is a Phosphotyrosine. Ser-263 carries the phosphoserine modification.

Belongs to the eukaryotic ribosomal protein eS1 family. Component of the small ribosomal subunit. Mature ribosomes consist of a small (40S) and a large (60S) subunit. The 40S subunit contains about 33 different proteins and 1 molecule of RNA (18S). The 60S subunit contains about 49 different proteins and 3 molecules of RNA (28S, 5.8S and 5S). Identified in a IGF2BP1-dependent mRNP granule complex containing untranslated mRNAs. Binds with high affinity to IPO4. Interacts with DDIT3. Part of the small subunit (SSU) processome, composed of more than 70 proteins and the RNA chaperone small nucleolar RNA (snoRNA) U3. ADP-ribosylated at Tyr-155 by PARP1 in presence of HPF1.

The protein localises to the cytoplasm. The protein resides in the nucleus. It is found in the nucleolus. In terms of biological role, component of the small ribosomal subunit. The ribosome is a large ribonucleoprotein complex responsible for the synthesis of proteins in the cell. Part of the small subunit (SSU) processome, first precursor of the small eukaryotic ribosomal subunit. During the assembly of the SSU processome in the nucleolus, many ribosome biogenesis factors, an RNA chaperone and ribosomal proteins associate with the nascent pre-rRNA and work in concert to generate RNA folding, modifications, rearrangements and cleavage as well as targeted degradation of pre-ribosomal RNA by the RNA exosome. May play a role during erythropoiesis through regulation of transcription factor DDIT3. The polypeptide is Small ribosomal subunit protein eS1 (Rps3a) (Mus musculus (Mouse)).